The sequence spans 237 residues: Phosphoribosylaminoimidazole-succinocarboxamide synthase (237 aa).

Belongs to the SAICAR synthetase family.

It carries out the reaction 5-amino-1-(5-phospho-D-ribosyl)imidazole-4-carboxylate + L-aspartate + ATP = (2S)-2-[5-amino-1-(5-phospho-beta-D-ribosyl)imidazole-4-carboxamido]succinate + ADP + phosphate + 2 H(+). It functions in the pathway purine metabolism; IMP biosynthesis via de novo pathway; 5-amino-1-(5-phospho-D-ribosyl)imidazole-4-carboxamide from 5-amino-1-(5-phospho-D-ribosyl)imidazole-4-carboxylate: step 1/2. The protein is Phosphoribosylaminoimidazole-succinocarboxamide synthase of Proteus mirabilis (strain HI4320).